A 554-amino-acid chain; its full sequence is Undecaprenyl phosphate-alpha-4-amino-4-deoxy-L-arabinose arabinosyl transferase (554 aa).

11 consecutive transmembrane segments (helical) span residues 4-24 (LKGSGAALLALFFALVYLLPI), 87-107 (FGSIFSTALSAVFVYWLATLL), 115-135 (FLAALIYLSMLLVFSIGSYAV), 178-198 (FMTKGFLALAVPVISVLPIVI), 206-226 (LIIFGPIAIVGAVILSLPWAL), 262-282 (YLPILCLGVLPWLGLLPAALL), 293-313 (ELFFLLSWVLMPLIFFSVAKG), 315-335 (LPTYILPCMAPLSLLMAAYAT), 352-372 (INLIFGFICALAILVIGMGWV), 384-404 (QKVILATIAFAGWGIVGFATM), and 410-430 (HWHWAAACPLLFILLVGYLIP).

This sequence belongs to the glycosyltransferase 83 family.

It localises to the cell inner membrane. The catalysed reaction is 4-amino-4-deoxy-alpha-L-arabinopyranosyl di-trans,octa-cis-undecaprenyl phosphate + lipid IVA = lipid IIA + di-trans,octa-cis-undecaprenyl phosphate.. Its pathway is lipopolysaccharide metabolism; 4-amino-4-deoxy-beta-L-arabinose-lipid A biosynthesis. Functionally, catalyzes the transfer of the L-Ara4N moiety of the glycolipid undecaprenyl phosphate-alpha-L-Ara4N to lipid A. The modified arabinose is attached to lipid A and is required for resistance to polymyxin and cationic antimicrobial peptides. The chain is Undecaprenyl phosphate-alpha-4-amino-4-deoxy-L-arabinose arabinosyl transferase from Yersinia enterocolitica serotype O:8 / biotype 1B (strain NCTC 13174 / 8081).